Here is a 196-residue protein sequence, read N- to C-terminus: Putative 3-methyladenine DNA glycosylase (196 aa).

This sequence belongs to the DNA glycosylase MPG family.

The chain is Putative 3-methyladenine DNA glycosylase from Bacillus licheniformis (strain ATCC 14580 / DSM 13 / JCM 2505 / CCUG 7422 / NBRC 12200 / NCIMB 9375 / NCTC 10341 / NRRL NRS-1264 / Gibson 46).